Reading from the N-terminus, the 434-residue chain is MENSERIKKWKEERAKVAQESRASRLQQKEDERALRQTEKSADAKSHHNPDAGWSATDADSVRRASLVIKERRVQQAKQSLRRLFLYIALPLLVIMLMSWILTSHFYSADATFIVQTDASQDNFSGTSFFGAGNKMSEGFQVREFILSKEMMDRMEKELGFLSYFAQDDIALFSRFHAPLGINDDPYRYYLSKVSVAVDIQQGMLRLNVKARSAKQAEFFAQRILSFAEQHVNTVSARMQKERILWLENDVKSAQENLGAARLELLKIQHIQKDIDPKETITAIYQLIAGFETQLAEAKAEYAQLMVNGLDQNPLIPRLSAKIKVLEKQIGEQRNRLSNKLGSQGSSESLSLFEDLRLQSEIAKARWESALQTLQQGKLQALRERQYLLIISQPMAESDTTRYADGTKWLLFFVLLGITYLVTSLLITIRRMRE.

The segment covering 1 to 50 (MENSERIKKWKEERAKVAQESRASRLQQKEDERALRQTEKSADAKSHHNP) has biased composition (basic and acidic residues). Positions 1 to 58 (MENSERIKKWKEERAKVAQESRASRLQQKEDERALRQTEKSADAKSHHNPDAGWSATD) are disordered. Helical transmembrane passes span 84 to 104 (LFLYIALPLLVIMLMSWILTS) and 409 to 429 (WLLFFVLLGITYLVTSLLITI).

This sequence belongs to the BexC/CtrB/KpsE family.

The protein localises to the cell inner membrane. In terms of biological role, may form an ATP-driven capsule polysaccharide export apparatus, in association with the VexA, VexB and VexC proteins. The polypeptide is Vi polysaccharide export inner-membrane protein VexD (vexD) (Salmonella typhi).